The sequence spans 397 residues: Tryptophan synthase beta chain (397 aa).

Lys87 carries the N6-(pyridoxal phosphate)lysine modification.

It belongs to the TrpB family. Tetramer of two alpha and two beta chains. The cofactor is pyridoxal 5'-phosphate.

It catalyses the reaction (1S,2R)-1-C-(indol-3-yl)glycerol 3-phosphate + L-serine = D-glyceraldehyde 3-phosphate + L-tryptophan + H2O. The protein operates within amino-acid biosynthesis; L-tryptophan biosynthesis; L-tryptophan from chorismate: step 5/5. Its function is as follows. The beta subunit is responsible for the synthesis of L-tryptophan from indole and L-serine. The polypeptide is Tryptophan synthase beta chain (Salmonella agona (strain SL483)).